Consider the following 119-residue polypeptide: Ribosome-binding factor A (119 aa).

It belongs to the RbfA family. In terms of assembly, monomer. Binds 30S ribosomal subunits, but not 50S ribosomal subunits or 70S ribosomes.

The protein localises to the cytoplasm. In terms of biological role, one of several proteins that assist in the late maturation steps of the functional core of the 30S ribosomal subunit. Associates with free 30S ribosomal subunits (but not with 30S subunits that are part of 70S ribosomes or polysomes). Required for efficient processing of 16S rRNA. May interact with the 5'-terminal helix region of 16S rRNA. The protein is Ribosome-binding factor A of Citrifermentans bemidjiense (strain ATCC BAA-1014 / DSM 16622 / JCM 12645 / Bem) (Geobacter bemidjiensis).